Here is a 159-residue protein sequence, read N- to C-terminus: Disease resistance response protein Pi176 (159 aa).

The protein belongs to the BetVI family.

In Pisum sativum (Garden pea), this protein is Disease resistance response protein Pi176.